The sequence spans 224 residues: Probable molybdenum cofactor guanylyltransferase (224 aa).

Residues 20–22 (LAG), Lys-33, Asp-88, and Asp-117 each bind GTP. Asp-117 lines the Mg(2+) pocket.

It belongs to the MobA family. Mg(2+) is required as a cofactor.

Its subcellular location is the cytoplasm. The catalysed reaction is Mo-molybdopterin + GTP + H(+) = Mo-molybdopterin guanine dinucleotide + diphosphate. Transfers a GMP moiety from GTP to Mo-molybdopterin (Mo-MPT) cofactor (Moco or molybdenum cofactor) to form Mo-molybdopterin guanine dinucleotide (Mo-MGD) cofactor. The sequence is that of Probable molybdenum cofactor guanylyltransferase from Methanosarcina mazei (strain ATCC BAA-159 / DSM 3647 / Goe1 / Go1 / JCM 11833 / OCM 88) (Methanosarcina frisia).